The following is a 229-amino-acid chain: uncharacterized protein (229 aa).

This is an uncharacterized protein from Methanocaldococcus jannaschii (strain ATCC 43067 / DSM 2661 / JAL-1 / JCM 10045 / NBRC 100440) (Methanococcus jannaschii).